The chain runs to 540 residues: O-phosphoserine--tRNA(Cys) ligase (540 aa).

Substrate is bound by residues 188–190 (HMT), 233–235 (SAS), 275–276 (YY), and asparagine 319.

The protein belongs to the class-II aminoacyl-tRNA synthetase family. O-phosphoseryl-tRNA(Cys) synthetase subfamily. Homotetramer. Interacts with SepCysS.

The enzyme catalyses tRNA(Cys) + O-phospho-L-serine + ATP = O-phospho-L-seryl-tRNA(Cys) + AMP + diphosphate. Catalyzes the attachment of O-phosphoserine (Sep) to tRNA(Cys). The protein is O-phosphoserine--tRNA(Cys) ligase of Methanococcus aeolicus (strain ATCC BAA-1280 / DSM 17508 / OCM 812 / Nankai-3).